Here is an 89-residue protein sequence, read N- to C-terminus: Protein M7 (89 aa).

Positions 1-25 (MAAMKSLATAILVVLLLRRLPRGLS) are cleaved as a signal peptide. 4 cysteine pairs are disulfide-bonded: Cys-28/Cys-65, Cys-38/Cys-54, Cys-55/Cys-80, and Cys-67/Cys-87.

It belongs to the A9/FIL1 family. Tapetum of anthers.

It is found in the secreted. The chain is Protein M7 (M7) from Lilium henryi (Henry's lily).